The chain runs to 30 residues: Pyrrole-2-carboxylate oxygenase (30 aa).

As to quaternary structure, homotrimer. It depends on FAD as a cofactor.

It carries out the reaction pyrrole-2-carboxylate + NADH + O2 + H(+) = 5-hydroxypyrrole-2-carboxylate + NAD(+) + H2O. Monooxygenase that initiates the degradation of pyrrole-2-carboxylate, which allows Arthrobacter sp. strain Py1 to grow on pyrrole-2-carboxylate as sole carbon, nitrogen, and energy source. To a lesser extent, can also use pyrrole, pyrrole-2-aldehyde, and indole-2-carboxylate as substrate. This is Pyrrole-2-carboxylate oxygenase from Arthrobacter sp. (strain Py1).